Reading from the N-terminus, the 253-residue chain is GTP cyclohydrolase III (253 aa).

Belongs to the archaeal-type GTP cyclohydrolase family.

It carries out the reaction GTP + 3 H2O = 2-amino-5-formylamino-6-(5-phospho-D-ribosylamino)pyrimidin-4(3H)-one + 2 phosphate + 2 H(+). Its function is as follows. Catalyzes the formation of 2-amino-5-formylamino-6-ribofuranosylamino-4(3H)-pyrimidinone ribonucleotide monophosphate and inorganic phosphate from GTP. Also has an independent pyrophosphate phosphohydrolase activity. This chain is GTP cyclohydrolase III, found in Natronomonas pharaonis (strain ATCC 35678 / DSM 2160 / CIP 103997 / JCM 8858 / NBRC 14720 / NCIMB 2260 / Gabara) (Halobacterium pharaonis).